The primary structure comprises 199 residues: uncharacterized protein (199 aa).

This is an uncharacterized protein from Rhodococcus erythropolis (Arthrobacter picolinophilus).